Reading from the N-terminus, the 466-residue chain is Soluble pyridine nucleotide transhydrogenase (466 aa).

An FAD-binding site is contributed by 36 to 45 (ERYQNVGGGC).

This sequence belongs to the class-I pyridine nucleotide-disulfide oxidoreductase family. As to quaternary structure, homooligomer; probable homooctamer. FAD serves as cofactor.

It localises to the cytoplasm. The catalysed reaction is NAD(+) + NADPH = NADH + NADP(+). Its function is as follows. Conversion of NADPH, generated by peripheral catabolic pathways, to NADH, which can enter the respiratory chain for energy generation. This chain is Soluble pyridine nucleotide transhydrogenase, found in Escherichia coli O6:H1 (strain CFT073 / ATCC 700928 / UPEC).